Here is a 132-residue protein sequence, read N- to C-terminus: Matrix protein (132 aa).

The protein localises to the virion membrane. Functionally, envelope protein that may play a role in host-cell attachment and viral genome entry. The chain is Matrix protein from Halorubrum pleomorphic virus 1 (HRPV-1).